The following is a 90-amino-acid chain: Small ribosomal subunit protein uS15 (90 aa).

This sequence belongs to the universal ribosomal protein uS15 family. Part of the 30S ribosomal subunit. Forms a bridge to the 50S subunit in the 70S ribosome, contacting the 23S rRNA.

In terms of biological role, one of the primary rRNA binding proteins, it binds directly to 16S rRNA where it helps nucleate assembly of the platform of the 30S subunit by binding and bridging several RNA helices of the 16S rRNA. Functionally, forms an intersubunit bridge (bridge B4) with the 23S rRNA of the 50S subunit in the ribosome. This chain is Small ribosomal subunit protein uS15, found in Mycoplasmoides gallisepticum (strain R(low / passage 15 / clone 2)) (Mycoplasma gallisepticum).